The primary structure comprises 393 residues: Probable WRKY transcription factor 25 (393 aa).

A DNA-binding region (WRKY 1) is located at residues 160–224 (MVSRNSNDGY…YKGGHNHPKP (65 aa)). Residues cysteine 191, cysteine 196, histidine 219, and histidine 221 each contribute to the Zn(2+) site. Disordered stretches follow at residues 217 to 242 (GGHN…VNGR) and 277 to 303 (SEYG…DEGM). Polar residues predominate over residues 229–240 (RPSQSSLPSSVN). Residues 289–298 (PEMKRMKREG) are compositionally biased toward basic and acidic residues. Residues 322 to 387 (SDIDVLIDGF…YEGRHNHDIP (66 aa)) constitute a DNA-binding region (WRKY 2). Residues cysteine 353, cysteine 358, histidine 382, and histidine 384 each contribute to the Zn(2+) site.

It belongs to the WRKY group I family. As to quaternary structure, interacts with MKS1. Interacts with SIB1. Interacts with VQ10 and CAMBP25/VQ15. Phosphorylated by MPK4. In terms of tissue distribution, highly expressed in roots and at lower levels in leaves, stems and seeds.

Its subcellular location is the nucleus. Functionally, transcription factor. Interacts specifically with the W box (5'-(T)TGAC[CT]-3'), a frequently occurring elicitor-responsive cis-acting element. Functions with WRKY33 as positive regulator of salt stress response and abscisic acid (ABA) signaling. Plays a partial role in heat stress tolerance. Functions with WRKY26 and WRKY33 as positive regulator of plant thermotolerance by partially participating in ethylene-response signal transduction pathway. The sequence is that of Probable WRKY transcription factor 25 (WRKY25) from Arabidopsis thaliana (Mouse-ear cress).